Here is a 239-residue protein sequence, read N- to C-terminus: MRPSQRQANELRPVRLTRRYTRHAEGSVLVEFGDTRVLCTASVEEAVPPFLKGKGRGWVTAEYGMLPRATHTRSAREAAKGKQTGRTQEIQRLIGRSLRAVVDLAALGERQVVIDCDVLQADGGTRTASITGAYVALHDALEGLVAAGKLAANPMTDFVAAISVGIVDGVPVLDLDYTEDSGCDTDMNVVMTGSGGIIEVQGTAEGTPFSRTELNALIDLAEAGIGRLVELQKAALAGA.

Phosphate is bound by residues Arg86 and 124-126; that span reads GTR.

Belongs to the RNase PH family. In terms of assembly, homohexameric ring arranged as a trimer of dimers.

It carries out the reaction tRNA(n+1) + phosphate = tRNA(n) + a ribonucleoside 5'-diphosphate. In terms of biological role, phosphorolytic 3'-5' exoribonuclease that plays an important role in tRNA 3'-end maturation. Removes nucleotide residues following the 3'-CCA terminus of tRNAs; can also add nucleotides to the ends of RNA molecules by using nucleoside diphosphates as substrates, but this may not be physiologically important. Probably plays a role in initiation of 16S rRNA degradation (leading to ribosome degradation) during starvation. The polypeptide is Ribonuclease PH (Azoarcus sp. (strain BH72)).